A 219-amino-acid chain; its full sequence is Transmembrane protein 17A (219 aa).

N-linked (GlcNAc...) asparagine glycosylation is found at N18 and N27. A run of 4 helical transmembrane segments spans residues 56–76 (MMLYFNMFFFPFWWISELLML), 83–103 (LPVYYQCLLVTGMVLISIFEV), 121–141 (LAGFWLISFLFQLPILLFFIT), and 153–173 (AVHSLYLAFLLGELMASFLAL).

The protein belongs to the TMEM17 family. In terms of assembly, part of the tectonic-like complex (also named B9 complex).

Its subcellular location is the cell projection. The protein resides in the cilium membrane. In terms of biological role, transmembrane component of the tectonic-like complex, a complex localized at the transition zone of primary cilia and acting as a barrier that prevents diffusion of transmembrane proteins between the cilia and plasma membranes. Required for ciliogenesis and sonic hedgehog/SHH signaling. The chain is Transmembrane protein 17A (tmem17a) from Danio rerio (Zebrafish).